A 299-amino-acid chain; its full sequence is ATP phosphoribosyltransferase (299 aa).

Belongs to the ATP phosphoribosyltransferase family. Long subfamily. As to quaternary structure, equilibrium between an active dimeric form, an inactive hexameric form and higher aggregates. Interconversion between the various forms is largely reversible and is influenced by the natural substrates and inhibitors of the enzyme. Requires Mg(2+) as cofactor.

Its subcellular location is the cytoplasm. It carries out the reaction 1-(5-phospho-beta-D-ribosyl)-ATP + diphosphate = 5-phospho-alpha-D-ribose 1-diphosphate + ATP. It functions in the pathway amino-acid biosynthesis; L-histidine biosynthesis; L-histidine from 5-phospho-alpha-D-ribose 1-diphosphate: step 1/9. Feedback inhibited by histidine. Catalyzes the condensation of ATP and 5-phosphoribose 1-diphosphate to form N'-(5'-phosphoribosyl)-ATP (PR-ATP). Has a crucial role in the pathway because the rate of histidine biosynthesis seems to be controlled primarily by regulation of HisG enzymatic activity. This chain is ATP phosphoribosyltransferase, found in Enterobacter sp. (strain 638).